The sequence spans 784 residues: LPS-assembly protein LptD (784 aa).

The first 24 residues, 1-24 (MKKRIPTLLATMIATALYSQQGLA), serve as a signal peptide directing secretion. 2 disulfide bridges follow: cysteine 31–cysteine 724 and cysteine 173–cysteine 725.

It belongs to the LptD family. As to quaternary structure, component of the lipopolysaccharide transport and assembly complex. Interacts with LptE and LptA. Post-translationally, contains two intramolecular disulfide bonds.

The protein resides in the cell outer membrane. Its function is as follows. Together with LptE, is involved in the assembly of lipopolysaccharide (LPS) at the surface of the outer membrane. The chain is LPS-assembly protein LptD from Escherichia coli O6:K15:H31 (strain 536 / UPEC).